The chain runs to 321 residues: MLNKLIERENLSFEESYELFNVLLNESEMRIAAYLVALQTKGLTADEIAGFAKAMRDNAVKIDLGDVTDTCGTGGDGSKTINVSTAVSIILACFTKVAKHGNVSITSNSGSANVYKALGCKIPETPDDAKKSMDKTNFAFLFAQKYHPALKKIMPVRNELKVKTIFNILGPLANPANPKYQILGVNSSELCDNVAIALSKVGGIKKALVVYGNGLDELTPNGTSKITEYDGKFDTYEVTPKDFGLDYSKIIPCESPDESAKRLIDVFSGKINEDRNFILMNAAAALYTSEIASDFLDGVEIAKEAIESGKVLKKLEEIRNV.

Residues glycine 72, 75–76, threonine 80, 82–85, 99–107, and serine 111 each bind 5-phospho-alpha-D-ribose 1-diphosphate; these read GD, NVST, and KHGNVSITS. Glycine 72 contributes to the anthranilate binding site. Serine 84 contacts Mg(2+). Residue asparagine 102 participates in anthranilate binding. Arginine 157 contributes to the anthranilate binding site. Aspartate 216 and glutamate 217 together coordinate Mg(2+).

It belongs to the anthranilate phosphoribosyltransferase family. As to quaternary structure, homodimer. The cofactor is Mg(2+).

The catalysed reaction is N-(5-phospho-beta-D-ribosyl)anthranilate + diphosphate = 5-phospho-alpha-D-ribose 1-diphosphate + anthranilate. It participates in amino-acid biosynthesis; L-tryptophan biosynthesis; L-tryptophan from chorismate: step 2/5. Functionally, catalyzes the transfer of the phosphoribosyl group of 5-phosphorylribose-1-pyrophosphate (PRPP) to anthranilate to yield N-(5'-phosphoribosyl)-anthranilate (PRA). This chain is Anthranilate phosphoribosyltransferase, found in Methanococcus maripaludis (strain DSM 14266 / JCM 13030 / NBRC 101832 / S2 / LL).